A 476-amino-acid chain; its full sequence is UDP-N-acetylmuramate--L-alanine ligase (476 aa).

107 to 113 (GTHGKTT) serves as a coordination point for ATP.

Belongs to the MurCDEF family.

It is found in the cytoplasm. The enzyme catalyses UDP-N-acetyl-alpha-D-muramate + L-alanine + ATP = UDP-N-acetyl-alpha-D-muramoyl-L-alanine + ADP + phosphate + H(+). It participates in cell wall biogenesis; peptidoglycan biosynthesis. Its function is as follows. Cell wall formation. The sequence is that of UDP-N-acetylmuramate--L-alanine ligase from Roseiflexus castenholzii (strain DSM 13941 / HLO8).